Reading from the N-terminus, the 75-residue chain is Vacuolar ATPase assembly integral membrane protein VMA21 (75 aa).

Residues 1–8 (MPVDVAPG) are Cytoplasmic-facing. The helical transmembrane segment at 9 to 29 (VIKKLMFFTAAMVICPLLTFF) threads the bilayer. At 30–41 (SIKQFTTNTIVS) the chain is on the lumenal side. A helical transmembrane segment spans residues 42-62 (GGLAALAANLVLIGYIVVAFM). Topologically, residues 63–75 (EDTTDVKAESKKD) are cytoplasmic.

Belongs to the VMA21 family.

Its subcellular location is the endoplasmic reticulum membrane. It localises to the endoplasmic reticulum-Golgi intermediate compartment membrane. It is found in the cytoplasmic vesicle. The protein localises to the COPII-coated vesicle membrane. In terms of biological role, required for the assembly of the V0 complex of the vacuolar ATPase (V-ATPase) in the endoplasmic reticulum. This chain is Vacuolar ATPase assembly integral membrane protein VMA21, found in Vanderwaltozyma polyspora (strain ATCC 22028 / DSM 70294 / BCRC 21397 / CBS 2163 / NBRC 10782 / NRRL Y-8283 / UCD 57-17) (Kluyveromyces polysporus).